The following is a 197-amino-acid chain: ATP-dependent Clp protease proteolytic subunit (197 aa).

Ser100 serves as the catalytic Nucleophile. The active site involves His125.

Belongs to the peptidase S14 family. Component of the chloroplastic Clp protease core complex.

It localises to the plastid. The protein resides in the chloroplast stroma. The catalysed reaction is Hydrolysis of proteins to small peptides in the presence of ATP and magnesium. alpha-casein is the usual test substrate. In the absence of ATP, only oligopeptides shorter than five residues are hydrolyzed (such as succinyl-Leu-Tyr-|-NHMec, and Leu-Tyr-Leu-|-Tyr-Trp, in which cleavage of the -Tyr-|-Leu- and -Tyr-|-Trp bonds also occurs).. Cleaves peptides in various proteins in a process that requires ATP hydrolysis. Has a chymotrypsin-like activity. Plays a major role in the degradation of misfolded proteins. This Angiopteris evecta (Mule's foot fern) protein is ATP-dependent Clp protease proteolytic subunit.